Consider the following 230-residue polypeptide: Cysteine S-methyltransferase OspZ (230 aa).

Positions 49–52 (GITR) are interaction with host proteins TAB2, TAB3 and ZRANB3. S-adenosyl-L-methionine contacts are provided by A92, S98, R107, Q111, Y204, and E208.

This sequence belongs to the NleE/OspZ family. As to quaternary structure, monomer.

Its subcellular location is the secreted. The protein resides in the host cytoplasm. The protein localises to the host nucleus. It catalyses the reaction L-cysteinyl-[protein] + S-adenosyl-L-methionine = S-methyl-L-cysteinyl-[protein] + S-adenosyl-L-homocysteine + H(+). Functionally, cysteine methyltransferase effector that inhibits host cell NF-kappa-B activation by preventing nuclear translocation of host protein RELA/p65. Acts by mediating cysteine methylation of host proteins TAB2 and TAB3: methylation of a conserved cysteine residue of the RanBP2-type zinc finger (NZF) of TAB2 and TAB3 disrupts zinc-binding, thereby inactivating the ubiquitin chain-binding activity of TAB2 and TAB3, leading to NF-kappa-B inactivation. Also mediates cysteine methylation of host protein ZRANB3, inactivating its ability to bind ubiquitin chains. The polypeptide is Cysteine S-methyltransferase OspZ (Shigella boydii).